The following is a 286-amino-acid chain: Bifunctional protein FolD (286 aa).

An NADP(+)-binding site is contributed by 166 to 168 (GAS).

Belongs to the tetrahydrofolate dehydrogenase/cyclohydrolase family. Homodimer.

The catalysed reaction is (6R)-5,10-methylene-5,6,7,8-tetrahydrofolate + NADP(+) = (6R)-5,10-methenyltetrahydrofolate + NADPH. It carries out the reaction (6R)-5,10-methenyltetrahydrofolate + H2O = (6R)-10-formyltetrahydrofolate + H(+). It functions in the pathway one-carbon metabolism; tetrahydrofolate interconversion. In terms of biological role, catalyzes the oxidation of 5,10-methylenetetrahydrofolate to 5,10-methenyltetrahydrofolate and then the hydrolysis of 5,10-methenyltetrahydrofolate to 10-formyltetrahydrofolate. In Idiomarina loihiensis (strain ATCC BAA-735 / DSM 15497 / L2-TR), this protein is Bifunctional protein FolD.